Reading from the N-terminus, the 425-residue chain is Serine--tRNA ligase (425 aa).

L-serine is bound at residue 231 to 233 (TAE). 262–264 (RSE) is an ATP binding site. Position 285 (Glu285) interacts with L-serine. 349–352 (EISS) lines the ATP pocket. Ser385 contacts L-serine.

It belongs to the class-II aminoacyl-tRNA synthetase family. Type-1 seryl-tRNA synthetase subfamily. Homodimer. The tRNA molecule binds across the dimer.

It is found in the cytoplasm. The enzyme catalyses tRNA(Ser) + L-serine + ATP = L-seryl-tRNA(Ser) + AMP + diphosphate + H(+). It carries out the reaction tRNA(Sec) + L-serine + ATP = L-seryl-tRNA(Sec) + AMP + diphosphate + H(+). It functions in the pathway aminoacyl-tRNA biosynthesis; selenocysteinyl-tRNA(Sec) biosynthesis; L-seryl-tRNA(Sec) from L-serine and tRNA(Sec): step 1/1. In terms of biological role, catalyzes the attachment of serine to tRNA(Ser). Is also able to aminoacylate tRNA(Sec) with serine, to form the misacylated tRNA L-seryl-tRNA(Sec), which will be further converted into selenocysteinyl-tRNA(Sec). The protein is Serine--tRNA ligase of Maricaulis maris (strain MCS10) (Caulobacter maris).